Here is a 144-residue protein sequence, read N- to C-terminus: Tryparedoxin (144 aa).

A Thioredoxin domain is found at 2–144 (SGLAKYLPGA…PDGANFPWPN (143 aa)). Cys40 and Cys43 form a disulfide bridge.

It belongs to the thioredoxin family.

In terms of biological role, acts as a thiol-disulfide oxidoreductase. It is spontaneously reduced by trypanothione. The sequence is that of Tryparedoxin from Trypanosoma brucei brucei.